A 196-amino-acid polypeptide reads, in one-letter code: Small ribosomal subunit protein uS4c (196 aa).

The segment at 20-39 is disordered; it reads GLTRKTPKSGSNLKKKFHSG. The S4 RNA-binding domain occupies 89-152; that stretch reads MRLDNILFRL…RSKCLVQNSI (64 aa).

This sequence belongs to the universal ribosomal protein uS4 family. As to quaternary structure, part of the 30S ribosomal subunit. Contacts protein S5. The interaction surface between S4 and S5 is involved in control of translational fidelity.

The protein localises to the plastid. Its subcellular location is the chloroplast. Functionally, one of the primary rRNA binding proteins, it binds directly to 16S rRNA where it nucleates assembly of the body of the 30S subunit. With S5 and S12 plays an important role in translational accuracy. In Dendrocalamus giganteus (Giant bamboo), this protein is Small ribosomal subunit protein uS4c (rps4).